Here is a 220-residue protein sequence, read N- to C-terminus: Ribosome maturation factor RimP (220 aa).

The disordered stretch occupies residues 173 to 220 (KKDKEERRQRKKARRRGEKGGVGDDGTAGEEQPDSAREGPARSASEGE).

The protein belongs to the RimP family.

Its subcellular location is the cytoplasm. Functionally, required for maturation of 30S ribosomal subunits. This Chelativorans sp. (strain BNC1) protein is Ribosome maturation factor RimP.